A 100-amino-acid chain; its full sequence is Probable steroid-binding protein 3 (100 aa).

Position 1 is an N-acetylmethionine (methionine 1). Positions 1–82 (MEFTAEQLSQ…LTEKEINTLN (82 aa)) constitute a Cytochrome b5 heme-binding domain. A sterol-binding region spans residues 1 to 82 (MEFTAEQLSQ…LTEKEINTLN (82 aa)).

The protein belongs to the cytochrome b5 family. MAPR subfamily.

It localises to the nucleus. The polypeptide is Probable steroid-binding protein 3 (MP3) (Arabidopsis thaliana (Mouse-ear cress)).